We begin with the raw amino-acid sequence, 127 residues long: Fluoride-specific ion channel FluC (127 aa).

The next 4 helical transmembrane spans lie at 7-27 (LLVALGGALGSLLRYGLGAWV), 31-51 (LGAGFPWSTLFVNALGSFLIG), 68-88 (LFLAVGVLGGFTTFSSLSYET), and 97-117 (VGKALLYAFGSLFLGLLLAFL). Residues Gly-76 and Thr-79 each coordinate Na(+).

Belongs to the fluoride channel Fluc/FEX (TC 1.A.43) family.

The protein resides in the cell inner membrane. The catalysed reaction is fluoride(in) = fluoride(out). Its activity is regulated as follows. Na(+) is not transported, but it plays an essential structural role and its presence is essential for fluoride channel function. In terms of biological role, fluoride-specific ion channel. Important for reducing fluoride concentration in the cell, thus reducing its toxicity. This chain is Fluoride-specific ion channel FluC, found in Thermus thermophilus (strain ATCC BAA-163 / DSM 7039 / HB27).